The primary structure comprises 37 residues: MRVSASVKKICRNCKIIRRKGVVRVICTDPRHKQRQG.

It belongs to the bacterial ribosomal protein bL36 family.

The polypeptide is Large ribosomal subunit protein bL36 (Polaromonas naphthalenivorans (strain CJ2)).